We begin with the raw amino-acid sequence, 304 residues long: Non-specific ribonucleoside hydrolase RihC (304 aa).

Residue His-233 is part of the active site.

The protein belongs to the IUNH family. RihC subfamily.

Hydrolyzes both purine and pyrimidine ribonucleosides with a broad-substrate specificity. In Escherichia coli O139:H28 (strain E24377A / ETEC), this protein is Non-specific ribonucleoside hydrolase RihC.